Reading from the N-terminus, the 807-residue chain is Glycerol-3-phosphate acyltransferase (807 aa).

The short motif at 308–313 is the HXXXXD motif element; the sequence is CHRSHM.

The protein belongs to the GPAT/DAPAT family.

Its subcellular location is the cell inner membrane. The enzyme catalyses sn-glycerol 3-phosphate + an acyl-CoA = a 1-acyl-sn-glycero-3-phosphate + CoA. Its pathway is phospholipid metabolism; CDP-diacylglycerol biosynthesis; CDP-diacylglycerol from sn-glycerol 3-phosphate: step 1/3. This Shewanella putrefaciens (strain CN-32 / ATCC BAA-453) protein is Glycerol-3-phosphate acyltransferase.